The sequence spans 132 residues: Glycine cleavage system H protein (132 aa).

One can recognise a Lipoyl-binding domain in the interval 24–107; that stretch reads TATIGLSAFA…GEEGWLIKVR (84 aa). The residue at position 65 (lysine 65) is an N6-lipoyllysine.

It belongs to the GcvH family. In terms of assembly, the glycine cleavage system is composed of four proteins: P, T, L and H. (R)-lipoate is required as a cofactor.

Functionally, the glycine cleavage system catalyzes the degradation of glycine. The H protein shuttles the methylamine group of glycine from the P protein to the T protein. In Synechocystis sp. (strain ATCC 27184 / PCC 6803 / Kazusa), this protein is Glycine cleavage system H protein.